The following is a 653-amino-acid chain: Leucine-rich repeat-containing protein 4 (653 aa).

Residues methionine 1–alanine 38 form the signal peptide. In terms of domain architecture, LRRNT spans alanine 39–serine 75. Topologically, residues alanine 39–lysine 527 are extracellular. 2 disulfide bridges follow: cysteine 46/cysteine 52 and cysteine 50/cysteine 61. LRR repeat units lie at residues asparagine 76–histidine 97, histidine 100–glycine 121, serine 124–tyrosine 145, lysine 148–arginine 169, serine 172–glycine 194, asparagine 197–valine 218, glycine 219–glycine 240, serine 243–glycine 264, and serine 267–proline 288. N-linked (GlcNAc...) asparagine glycans are attached at residues asparagine 277, asparagine 322, asparagine 363, asparagine 388, asparagine 410, asparagine 434, asparagine 440, asparagine 447, and asparagine 450. One can recognise an LRRCT domain in the interval asparagine 300–alanine 352. 2 disulfide bridges follow: cysteine 304-cysteine 329 and cysteine 306-cysteine 350. The 90-residue stretch at proline 353 to serine 442 folds into the Ig-like domain. Cysteine 374 and cysteine 424 are joined by a disulfide. The helical transmembrane segment at isoleucine 528–tyrosine 548 threads the bilayer. Topologically, residues lysine 549–isoleucine 653 are cytoplasmic.

As to quaternary structure, interacts with DLG4. Interacts (via LRR repeats) with NTNG2. Forms a complex with DLG4 and with NMDA receptors. N-glycosylated. As to expression, specifically expressed in brain.

The protein resides in the membrane. It is found in the postsynaptic cell membrane. Functionally, synaptic adhesion protein. Regulates the formation of exitatory synapses through the recruitment of pre-and-postsynaptic proteins. Organize the lamina/pathway-specific differentiation of dendrites. Plays an important role for auditory synaptic responses. Involved in the suppression of glioma. The protein is Leucine-rich repeat-containing protein 4 (LRRC4) of Homo sapiens (Human).